A 391-amino-acid chain; its full sequence is Leucine aminopeptidase 1 (391 aa).

A signal peptide spans Met1 to Ala19. The propeptide occupies Ala20–Val91. A glycan (N-linked (GlcNAc...) asparagine) is linked at Asn183. Residues His191 and Asp210 each coordinate Zn(2+). An N-linked (GlcNAc...) asparagine glycan is attached at Asn235. The Zn(2+) site is built by Glu249 and Asp276. A disulfide bridge links Cys325 with Cys329. His358 contributes to the Zn(2+) binding site.

The protein belongs to the peptidase M28 family. M28E subfamily. In terms of assembly, monomer. Zn(2+) serves as cofactor.

It is found in the secreted. Extracellular aminopeptidase that allows assimilation of proteinaceous substrates. This is Leucine aminopeptidase 1 (lap1) from Aspergillus niger (strain ATCC MYA-4892 / CBS 513.88 / FGSC A1513).